The chain runs to 209 residues: Molybdenum cofactor guanylyltransferase (209 aa).

GTP contacts are provided by residues 16–18 (LAG), Lys28, Asn56, Asp69, and Asp103. Position 103 (Asp103) interacts with Mg(2+).

The protein belongs to the MobA family. As to quaternary structure, monomer. The cofactor is Mg(2+).

It is found in the cytoplasm. It carries out the reaction Mo-molybdopterin + GTP + H(+) = Mo-molybdopterin guanine dinucleotide + diphosphate. In terms of biological role, transfers a GMP moiety from GTP to Mo-molybdopterin (Mo-MPT) cofactor (Moco or molybdenum cofactor) to form Mo-molybdopterin guanine dinucleotide (Mo-MGD) cofactor. This chain is Molybdenum cofactor guanylyltransferase, found in Rhizobium leguminosarum bv. trifolii (strain WSM2304).